The following is a 214-amino-acid chain: MRVKHKPWAKDRLEEFPAIYIKNPEDFKGQWREVFGNDNPVHIEIGSGKGQFISGMAKANPEINYIGIEMIESVLVSALDKAIEADVSNLRLVARDAKLLEECFEKGEIAQIYLNFSDPWPKKRHTKRRLTNPTFLTIYERLLPEAGEIHFKTDNRSLFEYSLVAFSEYNMLLTFVSLDLHNSDYEGNIKTEYEEKFSAKGFPIYRLEAKFDRN.

S-adenosyl-L-methionine contacts are provided by glutamate 44, glutamate 69, aspartate 96, and aspartate 118. The active site involves aspartate 118. Substrate contacts are provided by residues lysine 122, aspartate 154, and 191–194; that span reads TEYE.

This sequence belongs to the class I-like SAM-binding methyltransferase superfamily. TrmB family.

The catalysed reaction is guanosine(46) in tRNA + S-adenosyl-L-methionine = N(7)-methylguanosine(46) in tRNA + S-adenosyl-L-homocysteine. Its pathway is tRNA modification; N(7)-methylguanine-tRNA biosynthesis. Catalyzes the formation of N(7)-methylguanine at position 46 (m7G46) in tRNA. In Listeria monocytogenes serotype 4b (strain F2365), this protein is tRNA (guanine-N(7)-)-methyltransferase.